The following is a 136-amino-acid chain: Histone H3, embryonic (136 aa).

Residues 1–43 (MARTKQTARKSTGGKAPRKQLATKAARKSAPATGGVKKPHRYR) form a disordered region. Lys-5 carries the N6-methylated lysine modification. Lys-10 is modified (N6-acetyllysine; alternate). Lys-10 carries the post-translational modification N6-methylated lysine; alternate. Phosphoserine is present on Ser-11. 2 positions are modified to N6-acetyllysine: Lys-15 and Lys-24. Lys-28, Lys-37, and Lys-80 each carry N6-methylated lysine.

It belongs to the histone H3 family. As to quaternary structure, the nucleosome is a histone octamer containing two molecules each of H2A, H2B, H3 and H4 assembled in one H3-H4 heterotetramer and two H2A-H2B heterodimers. The octamer wraps approximately 147 bp of DNA. In terms of processing, acetylation is generally linked to gene activation. Methylation at Lys-5 is linked to gene activation. Methylation at Lys-10 is linked to gene repression.

The protein resides in the nucleus. It localises to the chromosome. Its function is as follows. Core component of nucleosome. Nucleosomes wrap and compact DNA into chromatin, limiting DNA accessibility to the cellular machineries which require DNA as a template. Histones thereby play a central role in transcription regulation, DNA repair, DNA replication and chromosomal stability. DNA accessibility is regulated via a complex set of post-translational modifications of histones, also called histone code, and nucleosome remodeling. The chain is Histone H3, embryonic from Strongylocentrotus purpuratus (Purple sea urchin).